Here is a 699-residue protein sequence, read N- to C-terminus: 1,4-alpha-glucan-branching enzyme (699 aa).

Substrate contacts are provided by residues 59–60 (NE) and 88–90 (WAP). Trp104 is a binding site for (1,4-alpha-D-glucosyl)n. 115–118 (DYGK) contacts substrate. A (1,4-alpha-D-glucosyl)n-binding site is contributed by Lys140. A Phosphotyrosine modification is found at Tyr170. A substrate-binding site is contributed by 330–333 (EVLR). Asp354 (nucleophile) is an active-site residue. Glu409 functions as the Proton donor in the catalytic mechanism.

The protein belongs to the glycosyl hydrolase 13 family. GlgB subfamily. Monomer.

The catalysed reaction is Transfers a segment of a (1-&gt;4)-alpha-D-glucan chain to a primary hydroxy group in a similar glucan chain.. The protein operates within glycan biosynthesis; glycogen biosynthesis. Glycogen-branching enzyme participates in the glycogen biosynthetic process along with glycogenin and glycogen synthase. Generates alpha-1,6-glucosidic branches from alpha-1,4-linked glucose chains, to increase solubility of the glycogen polymer. This Felis catus (Cat) protein is 1,4-alpha-glucan-branching enzyme (GBE1).